The sequence spans 196 residues: UPF0134 protein MPN_501 (196 aa).

The protein belongs to the UPF0134 family.

The chain is UPF0134 protein MPN_501 from Mycoplasma pneumoniae (strain ATCC 29342 / M129 / Subtype 1) (Mycoplasmoides pneumoniae).